A 578-amino-acid polypeptide reads, in one-letter code: MSSDHKSKFDLELNPFERSFATKESSSVSLNELAAASNNDAISDVNSVATSGSSINNGSSSNKHNLHIPNISSVNQQQGVNGKLPGITPPLFTPGGRRLPPIGLSPGGTTSRQYSNSTNSGSLQSNTDTLGSNIWGGLPTNQTFQPQPQPQPQPQQQQQPQQQQQTQQPHNFNQFMSGMRKTGLTPNESNIRSGLTPGGLTNFGFGSNLVPGLSTPGALLNGPITPGLSSLLGITQTPSSLLVPTTSSFSQNNQSHLIQPAANTSVGPIPESTALGPHVNIPQANQLQQDQSSQALVGGLPPSQPQPQPQPVIAQQIHTIPENQSIAFDMTQPAVANAHLPESKPDLSETANLQRDLNPTADTTTNTTTATKKRKNDTAGGTNKKAKVAKGKKKEPKSKSKGKNNQEDDQNASNKPEDENVPGKENGNEENHKVEAESKEEHLQNGNETTTTKTNNTGNSSNGTTTTTTTKSKSKKNSNVSEDDKRKNFLERNRVAASKCRQRKKLLIQKMEEELEFYSNGYRELSAEVNELRGAILLLKEKHNIQDEIIDGLLSKPTTVPTNVTSIPSTIPTTLNPT.

Over residues 39–50 (NDAISDVNSVAT) the composition is skewed to polar residues. 4 disordered regions span residues 39–169 (NDAI…TQQP), 176–195 (MSGM…RSGL), 287–311 (LQQD…QPQP), and 342–489 (ESKP…RKNF). Residues 51-62 (SGSSINNGSSSN) show a composition bias toward low complexity. 2 stretches are compositionally biased toward polar residues: residues 70 to 80 (NISSVNQQQGV) and 107 to 132 (GGTT…TLGS). Over residues 154-169 (PQQQQQPQQQQQTQQP) the composition is skewed to low complexity. Residues 184–193 (LTPNESNIRS) are compositionally biased toward polar residues. 2 stretches are compositionally biased toward low complexity: residues 287-296 (LQQDQSSQAL) and 356-370 (DLNP…TTTA). The span at 384–402 (KKAKVAKGKKKEPKSKSKG) shows a compositional bias: basic residues. The span at 415 to 443 (KPEDENVPGKENGNEENHKVEAESKEEHL) shows a compositional bias: basic and acidic residues. Positions 445 to 471 (NGNETTTTKTNNTGNSSNGTTTTTTTK) are enriched in low complexity. The 64-residue stretch at 483–546 (DDKRKNFLER…LLLKEKHNIQ (64 aa)) folds into the bZIP domain. The interval 485–505 (KRKNFLERNRVAASKCRQRKK) is basic motif. Residues 508–515 (IQKMEEEL) are leucine-zipper.

The protein belongs to the bZIP family. Undergoes HOG1-dependent phosphorylation after osmotic stress.

Its subcellular location is the nucleus. In terms of biological role, transcription repressor involved in cell wall damage response. Regulates 79 caspofungin-responsive genes, including several cell wall biogenesis genes such as CRH11, MNN2, and SKN1. Also controls the expression of pathogenesis and hyphal related genes and represses the yeast-to-hypha transition. Mediates the response to oxidative stress. The polypeptide is Transcriptional regulator SKO1 (SKO1) (Candida albicans (strain SC5314 / ATCC MYA-2876) (Yeast)).